The primary structure comprises 305 residues: Aspartate carbamoyltransferase catalytic subunit (305 aa).

The carbamoyl phosphate site is built by Arg51 and Thr52. Lys79 contacts L-aspartate. Residues Arg101, His129, and Gln132 each contribute to the carbamoyl phosphate site. The L-aspartate site is built by Arg165 and Arg220. Carbamoyl phosphate-binding residues include Gly258 and Pro259.

The protein belongs to the aspartate/ornithine carbamoyltransferase superfamily. ATCase family. As to quaternary structure, heterododecamer (2C3:3R2) of six catalytic PyrB chains organized as two trimers (C3), and six regulatory PyrI chains organized as three dimers (R2).

The enzyme catalyses carbamoyl phosphate + L-aspartate = N-carbamoyl-L-aspartate + phosphate + H(+). Its pathway is pyrimidine metabolism; UMP biosynthesis via de novo pathway; (S)-dihydroorotate from bicarbonate: step 2/3. Functionally, catalyzes the condensation of carbamoyl phosphate and aspartate to form carbamoyl aspartate and inorganic phosphate, the committed step in the de novo pyrimidine nucleotide biosynthesis pathway. The protein is Aspartate carbamoyltransferase catalytic subunit of Rubrobacter xylanophilus (strain DSM 9941 / JCM 11954 / NBRC 16129 / PRD-1).